Here is a 181-residue protein sequence, read N- to C-terminus: D-lyxose/D-mannose isomerase (181 aa).

His-75, His-77, Glu-88, and His-143 together coordinate Mn(2+).

Belongs to the D-lyxose ketol-isomerase family. As to quaternary structure, homodimer. Requires Mn(2+) as cofactor.

The enzyme catalyses D-lyxose = D-xylulose. It carries out the reaction D-mannose = D-fructose. Functionally, sugar isomerase that catalyzes the reversible isomerization of D-lyxose to D-xylulose, and D-mannose to D-fructose. Shows optimum activity using D-lyxose as substrate, but can also effectively catalyze the isomerization between D-fructose and D-mannose. The polypeptide is D-lyxose/D-mannose isomerase (Thermosediminibacter oceani (strain ATCC BAA-1034 / DSM 16646 / JW/IW-1228P)).